The sequence spans 804 residues: Endoplasmin (804 aa).

The first 21 residues, 1–21 (MRALWVLGLCCVLLTFGSVRA), serve as a signal peptide directing secretion. The SRT pseudosubstrate motif motif lies at 42-44 (SRT). The N-linked (GlcNAc...) asparagine glycan is linked to asparagine 62. Residue serine 64 is modified to Phosphoserine. An N-linked (GlcNAc...) asparagine glycan is attached at asparagine 107. Asparagine 107, aspartate 149, and asparagine 162 together coordinate ATP. Lysine 168 is modified (N6-(2-hydroxyisobutyryl)lysine). A Phosphoserine modification is found at serine 172. Phenylalanine 199 is an ATP binding site. N-linked (GlcNAc...) asparagine glycosylation occurs at asparagine 217. Positions 288-323 (TVEEPMEEEEAAKEEKEESDDEAAVEEEEEEKKPKT) are disordered. Over residues 289–317 (VEEPMEEEEAAKEEKEESDDEAAVEEEEE) the composition is skewed to acidic residues. 2 positions are modified to phosphoserine: serine 306 and serine 403. Residue lysine 404 is modified to N6-succinyllysine. The N-linked (GlcNAc...) asparagine glycan is linked to asparagine 445. Phosphoserine is present on serine 447. An N6-acetyllysine modification is found at lysine 479. N-linked (GlcNAc...) asparagine glycans are attached at residues asparagine 481 and asparagine 502. Lysine 633 bears the N6-succinyllysine mark. The tract at residues 750 to 804 (DPDAKVEEEPEEEPEETTEDTTEDTEQDDDEEMDAGADEEEQETSETSTAEKDEL) is disordered. Acidic residues predominate over residues 757–793 (EEPEEEPEETTEDTTEDTEQDDDEEMDAGADEEEQET). The Prevents secretion from ER signature appears at 801–804 (KDEL).

It belongs to the heat shock protein 90 family. As to quaternary structure, homodimer; disulfide-linked. Component of an EIF2 complex at least composed of CELF1/CUGBP1, CALR, CALR3, EIF2S1, EIF2S2, HSP90B1 and HSPA5. Part of a large chaperone multiprotein complex comprising DNAJB11, HSP90B1, HSPA5, HYOU, PDIA2, PDIA4, PDIA6, PPIB, SDF2L1, UGGT1 and very small amounts of ERP29, but not, or at very low levels, CALR nor CANX. Interacts with AIMP1; regulates its retention in the endoplasmic reticulum. Hyperglycosylated form interacts with OS9; promoting its degradation by the endoplasmic reticulum associated degradation (ERAD). Interacts with CNPY3. This interaction is disrupted in the presence of ATP. Interacts with TLR4 and TLR9, but not with TLR3. Interacts with MZB1 in a calcium-dependent manner. Interacts with METTL23. Interacts with IL1B; the interaction facilitates cargo translocation into the ERGIC. Interacts with EIF2AK3. Phosphorylated by CK2. Post-translationally, N-glycosylated cotranslationally at Asn-217 by STT3A-containing OST-A complex: this glycosylation is constitutive. In response to various stress, 5 additional facultative sites (Asn-62, Asn-107, Asn-445, Asn-481 and Asn-502) can be glycosylated post-translationally by STT3B-containing OST-B complex, leading to a hyperglycosylated form that is degraded by the ER-associated degradation (ERAD) pathway. In normal conditions, the OST-A complex together with CCDC134 prevent glycosylation at facultative sites during protein folding, thereby preventing hyperglycosylation. Mechanistically, nascent HSP90B1 is tethered during translation to a specialized CCDC134-containing translocon that forms a microenvironment for its folding, in which STT3A associates with the SRT pseudosubstrate motif, and prevents access to facultative glycosylation sites until folding is completed, rendering its facultative sites inaccessible to the OST-B complex.

It localises to the endoplasmic reticulum lumen. The protein localises to the sarcoplasmic reticulum lumen. It is found in the melanosome. It carries out the reaction ATP + H2O = ADP + phosphate + H(+). ATP-dependent chaperone involved in the processing of proteins in the endoplasmic reticulum, regulating their transport. Together with MESD, acts as a modulator of the Wnt pathway by promoting the folding of LRP6, a coreceptor of the canonical Wnt pathway. When associated with CNPY3, required for proper folding of Toll-like receptors. Promotes folding and trafficking of TLR4 to the cell surface. May participate in the unfolding of cytosolic leaderless cargos (lacking the secretion signal sequence) such as the interleukin 1/IL-1 to facilitate their translocation into the ERGIC (endoplasmic reticulum-Golgi intermediate compartment) and secretion; the translocation process is mediated by the cargo receptor TMED10. This Sus scrofa (Pig) protein is Endoplasmin (HSP90B1).